The primary structure comprises 492 residues: Xaa-Pro dipeptidase (492 aa).

Ala-2 bears the N-acetylalanine mark. At Ser-167 the chain carries Phosphoserine. His-255 contacts a dipeptide. Mn(2+) is bound by residues Asp-276, Asp-287, and His-370. Asp-287 is a binding site for a dipeptide. A dipeptide contacts are provided by His-377 and Arg-398. Residues Glu-412 and Glu-452 each contribute to the Mn(2+) site.

This sequence belongs to the peptidase M24B family. Eukaryotic-type prolidase subfamily. In terms of assembly, homodimer. Mn(2+) serves as cofactor.

The catalysed reaction is Xaa-L-Pro dipeptide + H2O = an L-alpha-amino acid + L-proline. Dipeptidase that catalyzes the hydrolysis of dipeptides with a prolyl (Xaa-Pro) or hydroxyprolyl residue in the C-terminal position. The preferred dipeptide substrate is Gly-Pro, but other Xaa-Pro dipeptides, such as Ala-Pro, Met-Pro, Phe-Pro, Val-Pro and Leu-Pro, can be cleaved. Plays an important role in collagen metabolism because the high level of iminoacids in collagen. This Rattus norvegicus (Rat) protein is Xaa-Pro dipeptidase (Pepd).